We begin with the raw amino-acid sequence, 450 residues long: Salicylate synthase (450 aa).

Catalysis depends on Glu-252, which acts as the Proton donor. 270–271 (GT) contacts substrate. Mg(2+) is bound at residue Glu-297. Substrate contacts are provided by residues Tyr-385, Arg-405, and 419–421 (GAG). Glu-431 and Glu-434 together coordinate Mg(2+). Lys-438 contributes to the substrate binding site.

The protein belongs to the anthranilate synthase component I family. Salicylate synthase subfamily. Monomer. The cofactor is Mg(2+).

It catalyses the reaction chorismate = isochorismate. The enzyme catalyses isochorismate = salicylate + pyruvate. It carries out the reaction chorismate = prephenate. It functions in the pathway siderophore biosynthesis; mycobactin biosynthesis. Involved in the incorporation of salicylate into the virulence-conferring salicylate-based siderophore mycobactin. Catalyzes the initial conversion of chorismate to yield the intermediate isochorismate (isochorismate synthase activity), and the subsequent elimination of the enolpyruvyl side chain in a lyase reaction to give salicylate (isochorismate pyruvate-lyase activity). In the absence of magnesium, MbtI displays a chorismate mutase activity and converts chorismate to prephenate. This Mycolicibacterium paratuberculosis (strain ATCC BAA-968 / K-10) (Mycobacterium paratuberculosis) protein is Salicylate synthase (mbtI).